The following is a 213-amino-acid chain: Uridine kinase (213 aa).

15–22 (GASASGKS) lines the ATP pocket.

This sequence belongs to the uridine kinase family.

Its subcellular location is the cytoplasm. The catalysed reaction is uridine + ATP = UMP + ADP + H(+). It catalyses the reaction cytidine + ATP = CMP + ADP + H(+). It functions in the pathway pyrimidine metabolism; CTP biosynthesis via salvage pathway; CTP from cytidine: step 1/3. Its pathway is pyrimidine metabolism; UMP biosynthesis via salvage pathway; UMP from uridine: step 1/1. The sequence is that of Uridine kinase from Escherichia fergusonii (strain ATCC 35469 / DSM 13698 / CCUG 18766 / IAM 14443 / JCM 21226 / LMG 7866 / NBRC 102419 / NCTC 12128 / CDC 0568-73).